The sequence spans 225 residues: Probable methylthioribulose-1-phosphate dehydratase (225 aa).

Cysteine 86 is a substrate binding site. Zn(2+)-binding residues include histidine 104 and histidine 106. The Proton donor/acceptor role is filled by glutamate 127. Position 183 (histidine 183) interacts with Zn(2+).

It belongs to the aldolase class II family. MtnB subfamily. Zn(2+) serves as cofactor.

It localises to the cytoplasm. The catalysed reaction is 5-(methylsulfanyl)-D-ribulose 1-phosphate = 5-methylsulfanyl-2,3-dioxopentyl phosphate + H2O. The protein operates within amino-acid biosynthesis; L-methionine biosynthesis via salvage pathway; L-methionine from S-methyl-5-thio-alpha-D-ribose 1-phosphate: step 2/6. Its function is as follows. Catalyzes the dehydration of methylthioribulose-1-phosphate (MTRu-1-P) into 2,3-diketo-5-methylthiopentyl-1-phosphate (DK-MTP-1-P). The protein is Probable methylthioribulose-1-phosphate dehydratase of Leishmania braziliensis.